Reading from the N-terminus, the 445-residue chain is Putative ankyrin repeat protein L797 (445 aa).

ANK repeat units follow at residues 73–102, 285–314, 315–344, and 346–375; these read FMEDCLRQSFYDGQLYIADYLVDKGADIYS, NHEHIANLATQNGHIEILKYLVEEKYELVG, NLYIIMFLACQYGHLEIIKYLVELGVDIRQ, and LDAFIYLLWQGSYFNILKYLLTVDSDIINI.

In Acanthamoeba polyphaga (Amoeba), this protein is Putative ankyrin repeat protein L797.